Here is a 285-residue protein sequence, read N- to C-terminus: Eukaryotic translation initiation factor 3 subunit F-2 (285 aa).

The 135-residue stretch at 11–145 (VVLQPLVLFQ…TRLYCGVEMG (135 aa)) folds into the MPN domain.

It belongs to the eIF-3 subunit F family. In terms of assembly, component of the eukaryotic translation initiation factor 3 (eIF-3) complex. The eIF-3 complex interacts with pix.

The protein resides in the cytoplasm. Its function is as follows. Component of the eukaryotic translation initiation factor 3 (eIF-3) complex, which is involved in protein synthesis of a specialized repertoire of mRNAs and, together with other initiation factors, stimulates binding of mRNA and methionyl-tRNAi to the 40S ribosome. The eIF-3 complex specifically targets and initiates translation of a subset of mRNAs involved in cell proliferation. The polypeptide is Eukaryotic translation initiation factor 3 subunit F-2 (Drosophila ananassae (Fruit fly)).